A 49-amino-acid chain; its full sequence is MRTYNRSLPARAGLTDLGKVTTHTKGPTPMVGLDSVSGQYWDQHAPLAD.

Positions Met-1–Lys-25 are excised as a propeptide. The isoaspartyl glycine isopeptide (Gly-Asp) cross-link spans Gly-26 to Asp-34.

Post-translationally, this lasso peptide is hydrolyzed to a linear form by the isopeptidase AtxE2, in vitro. The isopeptidase AtxE2 only recognizes the threaded form (but not the unthreaded form).

It is found in the cytoplasm. The protein localises to the secreted. Its function is as follows. Shows weak antimicrobial activity against its phylogenetic relative Caulobacter crescentus. Does not show activity against other bacteria tested (E.coli, Vibrio sp, Burkhoderia thailandensis, and Salmonella newport). In Asticcacaulis excentricus (strain ATCC 15261 / DSM 4724 / KCTC 12464 / NCIMB 9791 / VKM B-1370 / CB 48), this protein is Astexin-3.